The sequence spans 73 residues: Myosin-IB light chain (73 aa).

EF-hand domains are found at residues 3–38 (DEKTQLIEAFYNFDGDYDGFVSVEEFRGIIRDGLPM) and 38–73 (MTEAEITEFFEAADPNNTGFIDYKAFAAMLYSVDES). 4 residues coordinate Ca(2+): Asp16, Asp18, Asp20, and Glu27.

In terms of assembly, myosin I is a dimer of a heavy and a light chain. Inability to self-assemble into filaments. Interacts with myoB. Does not interact with myoC or myoD.

In terms of biological role, functions as the light chain for myosin-B. Binds calcium with submicromolar affinity and may sense physiological calcium changes. The protein is Myosin-IB light chain (mlcB) of Dictyostelium discoideum (Social amoeba).